The sequence spans 98 residues: Feather keratin 4 (98 aa).

Residue Ser-2 is modified to N-acetylserine.

It belongs to the avian keratin family. In terms of assembly, the avian keratins (F-ker, S-ker, C-ker and B-ker) are a complex mixture of very similar polypeptides.

In Gallus gallus (Chicken), this protein is Feather keratin 4.